The sequence spans 340 residues: Uroporphyrinogen decarboxylase (340 aa).

Residues 21–25, Asp71, Tyr148, Ser203, and His316 contribute to the substrate site; that span reads RQAGR.

This sequence belongs to the uroporphyrinogen decarboxylase family. As to quaternary structure, homodimer.

The protein resides in the cytoplasm. It carries out the reaction uroporphyrinogen III + 4 H(+) = coproporphyrinogen III + 4 CO2. Its pathway is porphyrin-containing compound metabolism; protoporphyrin-IX biosynthesis; coproporphyrinogen-III from 5-aminolevulinate: step 4/4. Its function is as follows. Catalyzes the decarboxylation of four acetate groups of uroporphyrinogen-III to yield coproporphyrinogen-III. This chain is Uroporphyrinogen decarboxylase, found in Campylobacter jejuni subsp. jejuni serotype O:6 (strain 81116 / NCTC 11828).